The primary structure comprises 345 residues: Uroporphyrinogen decarboxylase (345 aa).

Residues 27–31 (RQAGR), Phe-46, Asp-76, Tyr-152, Ser-207, and His-321 each bind substrate.

It belongs to the uroporphyrinogen decarboxylase family. Homodimer.

The protein resides in the cytoplasm. It catalyses the reaction uroporphyrinogen III + 4 H(+) = coproporphyrinogen III + 4 CO2. It participates in porphyrin-containing compound metabolism; protoporphyrin-IX biosynthesis; coproporphyrinogen-III from 5-aminolevulinate: step 4/4. In terms of biological role, catalyzes the decarboxylation of four acetate groups of uroporphyrinogen-III to yield coproporphyrinogen-III. This chain is Uroporphyrinogen decarboxylase, found in Staphylococcus aureus (strain USA300 / TCH1516).